Here is a 121-residue protein sequence, read N- to C-terminus: Large ribosomal subunit protein bL12 (121 aa).

The protein belongs to the bacterial ribosomal protein bL12 family. As to quaternary structure, homodimer. Part of the ribosomal stalk of the 50S ribosomal subunit. Forms a multimeric L10(L12)X complex, where L10 forms an elongated spine to which 2 to 4 L12 dimers bind in a sequential fashion. Binds GTP-bound translation factors.

Functionally, forms part of the ribosomal stalk which helps the ribosome interact with GTP-bound translation factors. Is thus essential for accurate translation. The sequence is that of Large ribosomal subunit protein bL12 from Clostridium novyi (strain NT).